A 131-amino-acid polypeptide reads, in one-letter code: D-ribose pyranase (131 aa).

Residue H20 is the Proton donor of the active site. Substrate is bound by residues D28, H98, and 120-122; that span reads YAN.

Belongs to the RbsD / FucU family. RbsD subfamily. In terms of assembly, homodecamer.

The protein localises to the cytoplasm. The enzyme catalyses beta-D-ribopyranose = beta-D-ribofuranose. Its pathway is carbohydrate metabolism; D-ribose degradation; D-ribose 5-phosphate from beta-D-ribopyranose: step 1/2. Its function is as follows. Catalyzes the interconversion of beta-pyran and beta-furan forms of D-ribose. The sequence is that of D-ribose pyranase from Laribacter hongkongensis (strain HLHK9).